The following is a 104-amino-acid chain: Protein translation factor SUI1 homolog (104 aa).

The protein belongs to the SUI1 family.

The sequence is that of Protein translation factor SUI1 homolog from Ignicoccus hospitalis (strain KIN4/I / DSM 18386 / JCM 14125).